Consider the following 482-residue polypeptide: MDRPIDDIVKNLLKFVVRGFYGGSFVLVLDAILFHSVLAEDDLKQLLSINKTELGPLIARLRSDRLISIHKQREYPPNSKSVERVYYYVKYPHAIDAIKWKVHQVVQRLKDDLDKNSEPNGYMCPICLTKYTQLEAVQLLNFDRTEFLCSLCDEPLVEDDSGKKNKEKQDKLNRLMDQIQPIIDSLKKIDDSRIEENTFEIALARLIPPQNQSHAAYTYNPKKGSTMFRPGDSAPLPNLMGTALGNDSSRRAGANSQATLHINITTASDEVAQRELQERQAEEKRKQNAVPEWHKQSTIGKTALGRLDNEEEFDPVVTASAMDSINPDNEPAQETSYQNNRTLTEQEMEERENEKTLNDYYAALAKKQAKLNKEEEEEEEEEEDEEEEEEEEMEDVMDDNDETARENALEDEFEDVTDTAGTAKTESNTSNDVKQESINDKTEDAVNATATASGPSANAKPNDGDDDDDDDDDEMDIEFEDV.

Residues 9-99 (VKNLLKFVVR…KYPHAIDAIK (91 aa)) enclose the HTH TFE/IIEalpha-type domain. The C4-type zinc finger occupies 124–152 (CPICLTKYTQLEAVQLLNFDRTEFLCSLC). Basic and acidic residues predominate over residues 274–286 (RELQERQAEEKRK). Disordered regions lie at residues 274-295 (RELQ…EWHK) and 321-482 (AMDS…FEDV). Residues 321-345 (AMDSINPDNEPAQETSYQNNRTLTE) are compositionally biased toward polar residues. Residues 374-401 (EEEEEEEEEEDEEEEEEEEMEDVMDDND) show a composition bias toward acidic residues. Residues 419–432 (TAGTAKTESNTSND) show a composition bias toward polar residues. The span at 433–444 (VKQESINDKTED) shows a compositional bias: basic and acidic residues. Acidic residues predominate over residues 464–482 (GDDDDDDDDDEMDIEFEDV).

This sequence belongs to the TFIIE alpha subunit family. In terms of assembly, TFIIE is a tetramer of two alpha (TFA1) and two beta (TFA2) subunits.

It localises to the nucleus. Functionally, recruits TFIIH to the initiation complex and stimulates the RNA polymerase II C-terminal domain kinase and DNA-dependent ATPase activities of TFIIH. Both TFIIH and TFIIE are required for promoter clearance by RNA polymerase. This Saccharomyces cerevisiae (strain ATCC 204508 / S288c) (Baker's yeast) protein is Transcription initiation factor IIE subunit alpha (TFA1).